Reading from the N-terminus, the 148-residue chain is Stathmin (148 aa).

Residues 4–145 (SDIQVKELEK…NKEGKDPGEA (142 aa)) enclose the SLD domain. The residue at position 16 (serine 16) is a Phosphoserine; by PKA. At serine 38 the chain carries Phosphoserine; by CDK1. Positions 41 to 140 (KKKDLSLEEI…EEVRKNKEGK (100 aa)) form a coiled coil. Serine 63 carries the phosphoserine; by PKA modification. The segment at 122–148 (RLREKDKHIEEVRKNKEGKDPGEAETN) is disordered.

This sequence belongs to the stathmin family. Binds to two alpha/beta-tubulin heterodimers. Many different phosphorylated forms are observed depending on specific combinations among the sites which can be phosphorylated. MAPK is responsible for the phosphorylation of stathmin in response to NGF.

The protein resides in the cytoplasm. It localises to the cytoskeleton. In terms of biological role, involved in the regulation of the microtubule (MT) filament system by destabilizing microtubules. It prevents assembly and promotes disassembly of microtubules. The protein is Stathmin (STMN1) of Gallus gallus (Chicken).